Reading from the N-terminus, the 418-residue chain is MEEIGILVEKIQDEIPALSVSRPQTGLSFLGPEPEDLEDLYSRYKKLQQELEFLEVQEEYIKDEQKNLKKEFLHAQEEVKRIQSIPLVIGQFLEAVDQNTAIVGSTTGSNYYVRILSTIDRELLKPNASVALHKHSNALVDVLPPEADSSIMMLTSDQKPDVMYADIGGMDIQKQEVREAVELPLTHFELYKQIGIDPPRGVLMYGPPGCGKTMLAKAVAHHTTAAFIRVVGSEFVQKYLGEGPRMVRDVFRLAKENAPAIIFIDEIDAIATKRFDAQTGADREVQRILLELLNQMDGFDQNVNVKVIMATNRADTLDPALLRPGRLDRKIEFPLPDRRQKRLIFSTITSKMNLSEEVDLEDYVARPDKISGADINSICQESGMLAVRENRYIVLAKDFEKAYKTVIKKDEQEHEFYK.

Methionine 1 carries the post-translational modification N-acetylmethionine. The residue at position 21 (serine 21) is a Phosphoserine. At threonine 25 the chain carries Phosphothreonine. The residue at position 28 (serine 28) is a Phosphoserine. 206–213 (GPPGCGKT) is an ATP binding site. N6-acetyllysine is present on residues lysine 397 and lysine 401.

Belongs to the AAA ATPase family. In terms of assembly, component of the 19S proteasome regulatory particle complex. The 26S proteasome consists of a 20S core particle (CP) and two 19S regulatory subunits (RP). The regulatory particle is made of a lid composed of 9 subunits, a base containing 6 ATPases including PSMC4 and few additional components. Interacts with NR1I3. Interacts with PAAF1. Interacts with TRIM5. Interacts with ZFAND1.

Its subcellular location is the cytoplasm. It is found in the nucleus. Its function is as follows. Component of the 26S proteasome, a multiprotein complex involved in the ATP-dependent degradation of ubiquitinated proteins. This complex plays a key role in the maintenance of protein homeostasis by removing misfolded or damaged proteins, which could impair cellular functions, and by removing proteins whose functions are no longer required. Therefore, the proteasome participates in numerous cellular processes, including cell cycle progression, apoptosis, or DNA damage repair. PSMC4 belongs to the heterohexameric ring of AAA (ATPases associated with diverse cellular activities) proteins that unfolds ubiquitinated target proteins that are concurrently translocated into a proteolytic chamber and degraded into peptides. The polypeptide is 26S proteasome regulatory subunit 6B (Psmc4) (Mus musculus (Mouse)).